We begin with the raw amino-acid sequence, 123 residues long: Large ribosomal subunit protein bL20 (123 aa).

This sequence belongs to the bacterial ribosomal protein bL20 family.

Functionally, binds directly to 23S ribosomal RNA and is necessary for the in vitro assembly process of the 50S ribosomal subunit. It is not involved in the protein synthesizing functions of that subunit. This chain is Large ribosomal subunit protein bL20, found in Pseudothermotoga lettingae (strain ATCC BAA-301 / DSM 14385 / NBRC 107922 / TMO) (Thermotoga lettingae).